Here is a 136-residue protein sequence, read N- to C-terminus: NADPH-dependent 7-cyano-7-deazaguanine reductase (136 aa).

Residue Cys53 is the Thioimide intermediate of the active site. The active-site Proton donor is the Asp60. Substrate is bound by residues 75 to 77 (VEL) and 94 to 95 (HE).

This sequence belongs to the GTP cyclohydrolase I family. QueF type 1 subfamily.

The protein resides in the cytoplasm. It catalyses the reaction 7-aminomethyl-7-carbaguanine + 2 NADP(+) = 7-cyano-7-deazaguanine + 2 NADPH + 3 H(+). It functions in the pathway tRNA modification; tRNA-queuosine biosynthesis. Catalyzes the NADPH-dependent reduction of 7-cyano-7-deazaguanine (preQ0) to 7-aminomethyl-7-deazaguanine (preQ1). The chain is NADPH-dependent 7-cyano-7-deazaguanine reductase from Nostoc sp. (strain PCC 7120 / SAG 25.82 / UTEX 2576).